The primary structure comprises 416 residues: Gamma-glutamyl phosphate reductase (416 aa).

This sequence belongs to the gamma-glutamyl phosphate reductase family.

The protein localises to the cytoplasm. It carries out the reaction L-glutamate 5-semialdehyde + phosphate + NADP(+) = L-glutamyl 5-phosphate + NADPH + H(+). It participates in amino-acid biosynthesis; L-proline biosynthesis; L-glutamate 5-semialdehyde from L-glutamate: step 2/2. In terms of biological role, catalyzes the NADPH-dependent reduction of L-glutamate 5-phosphate into L-glutamate 5-semialdehyde and phosphate. The product spontaneously undergoes cyclization to form 1-pyrroline-5-carboxylate. The sequence is that of Gamma-glutamyl phosphate reductase from Salmonella paratyphi C (strain RKS4594).